Here is a 310-residue protein sequence, read N- to C-terminus: tRNA pseudouridine synthase B (310 aa).

Asp49 acts as the Nucleophile in catalysis.

Belongs to the pseudouridine synthase TruB family. Type 1 subfamily.

The catalysed reaction is uridine(55) in tRNA = pseudouridine(55) in tRNA. Functionally, responsible for synthesis of pseudouridine from uracil-55 in the psi GC loop of transfer RNAs. This Rhizobium johnstonii (strain DSM 114642 / LMG 32736 / 3841) (Rhizobium leguminosarum bv. viciae) protein is tRNA pseudouridine synthase B.